The following is a 226-amino-acid chain: UPF0173 metal-dependent hydrolase Fnod_0635 (226 aa).

The protein belongs to the UPF0173 family.

The chain is UPF0173 metal-dependent hydrolase Fnod_0635 from Fervidobacterium nodosum (strain ATCC 35602 / DSM 5306 / Rt17-B1).